The chain runs to 310 residues: Protein YIP5 (310 aa).

Positions Met-1–Leu-84 are disordered. The span at Asp-10–Gly-22 shows a compositional bias: acidic residues. The segment covering Asp-35–Lys-57 has biased composition (polar residues). Ser-60 bears the Phosphoserine mark. Transmembrane regions (helical) follow at residues Thr-131–Ser-151, Leu-181–Val-201, Leu-220–Ile-240, Thr-249–Leu-269, and Ser-290–Phe-310.

Belongs to the YIP1 family. As to quaternary structure, interacts with SNX3, TVP18, TVP23, YIP1 and YIP4. Interacts with SEC4; The C-terminal cysteines in the Rab GTPase SEC4 are essential for the interaction. Interacts with YPT1, YPT6, YPT7, YPT10, YPT11, YPT31, YPT32 and YPT52; These proteins are all Rab GTPases.

The protein localises to the membrane. Its function is as follows. Possible role in vesicle-mediated transport. May be involved in proper membrane localization of Rab GTPases. The chain is Protein YIP5 (YIP5) from Saccharomyces cerevisiae (strain ATCC 204508 / S288c) (Baker's yeast).